A 953-amino-acid polypeptide reads, in one-letter code: Homeobox protein LUMINIDEPENDENS (953 aa).

Residues 63–123 (KIGKRPRDLL…VTQKTRVRKQ (61 aa)) constitute a DNA-binding region (homeobox). The segment at 404-430 (EQPGQKAAGKSPQTVRIGTSGRSRPMS) is disordered. Over residues 414–425 (SPQTVRIGTSGR) the composition is skewed to polar residues. 5 consecutive repeat copies span residues 498 to 502 (QPVNG), 507 to 511 (QPVNG), 516 to 520 (QPVNG), 525 to 529 (QPVNG), and 534 to 538 (QPVNG). The segment at 498-538 (QPVNGFSTIQPVNGPSAVQPVNGPLAVQPVNGPSALQPVNG) is 5 X 5 AA repeats of Q-P-V-N-G. Disordered regions lie at residues 606–668 (NSKE…EPQD), 733–763 (APNS…NPGM), and 861–953 (VGQM…KRWR). The span at 608-623 (KEADVQRNRNRRERET) shows a compositional bias: basic and acidic residues. A compositionally biased stretch (low complexity) spans 651–661 (PEIPSQQPPEE). Residues 733–742 (APNSSSSSNK) show a composition bias toward polar residues. The segment covering 869–884 (SSSWRSQQSQNSYYSH) has biased composition (low complexity). 2 stretches are compositionally biased toward polar residues: residues 888–934 (EIAS…QQQA) and 942–953 (THPYWNQNKRWR).

As to quaternary structure, interacts with SUF4. In terms of tissue distribution, expressed in shoot apex, root apex, leaf primordia and floral buds.

Its subcellular location is the nucleus. Functionally, seems to play a role in the regulation of flowering time in the autonomous flowering pathway by repressing FLOWERING LOCUS C expression. The protein is Homeobox protein LUMINIDEPENDENS (LD) of Arabidopsis thaliana (Mouse-ear cress).